The primary structure comprises 605 residues: uncharacterized protein (605 aa).

A helical membrane pass occupies residues 56–78; the sequence is ILWSSIAAACVILFAAYKTGAYF.

It is found in the cell membrane. This is an uncharacterized protein from Bacillus subtilis (strain 168).